The chain runs to 116 residues: Iron-sulfur cluster insertion protein ErpA (116 aa).

Iron-sulfur cluster contacts are provided by cysteine 44, cysteine 108, and cysteine 110.

The protein belongs to the HesB/IscA family. As to quaternary structure, homodimer. Iron-sulfur cluster serves as cofactor.

Required for insertion of 4Fe-4S clusters for at least IspG. This chain is Iron-sulfur cluster insertion protein ErpA, found in Pseudomonas aeruginosa (strain LESB58).